The primary structure comprises 26 residues: Acyl carrier protein (26 aa).

Residues 2-26 (SDTATRVQKIVVEHLGVESDKVTQE) form the Carrier domain.

Belongs to the acyl carrier protein (ACP) family. Post-translationally, 4'-phosphopantetheine is transferred from CoA to a specific serine of apo-ACP by AcpS. This modification is essential for activity because fatty acids are bound in thioester linkage to the sulfhydryl of the prosthetic group.

The protein localises to the cytoplasm. It participates in lipid metabolism; fatty acid biosynthesis. Functionally, carrier of the growing fatty acid chain in fatty acid biosynthesis. In Erythrobacter longus, this protein is Acyl carrier protein (acpP).